The primary structure comprises 375 residues: MKVWLLLGLLLVHEALEDVTGQHLPKNKRPKEPGENRIKPTNKKVKPKIPKMKDRDSANSAPKTQSIMMQVLDKGRFQKPAATLSLLAGQTVELRCKGSRIGWSYPAYLDTFKDSRLSVKQNERYGQLTLVNSTSADTGEFSCWVQLCSGYICRKDEAKTGSTYIFFTEKGELFVPSPSYFDVVYLNPDRQAVVPCRVTVLSAKVTLHREFPAKEIPANGTDIVYDMKRGFVYLQPHSEHQGVVYCRAEAGGRSQISVKYQLLYVAVPSGPPSTTILASSNKVKSGDDISVLCTVLGEPDVEVEFTWIFPGQKDERPVTIQDTWRLIHRGLGHTTRISQSVITVEDFETIDAGYYICTAQNLQGQTTVATTVEFS.

The N-terminal stretch at 1–21 (MKVWLLLGLLLVHEALEDVTG) is a signal peptide. Residues 22-64 (QHLPKNKRPKEPGENRIKPTNKKVKPKIPKMKDRDSANSAPKT) form a disordered region. Residues 40–50 (PTNKKVKPKIP) show a composition bias toward basic residues. The Ig-like C2-type 1 domain occupies 62–159 (PKTQSIMMQV…GYICRKDEAK (98 aa)). An intrachain disulfide couples Cys96 to Cys143. N-linked (GlcNAc...) asparagine glycosylation is found at Asn132 and Asn219. In terms of domain architecture, Ig-like C2-type 2 spans 272 to 375 (PSTTILASSN…TTVATTVEFS (104 aa)). A disulfide bridge links Cys293 with Cys357.

In terms of assembly, forms a complex composed of PDGFRL, TNK2 and GRB2. In terms of tissue distribution, expressed in colon, lung and liver.

Its subcellular location is the secreted. The protein is Platelet-derived growth factor receptor-like protein (PDGFRL) of Homo sapiens (Human).